A 388-amino-acid chain; its full sequence is Succinate--CoA ligase [ADP-forming] subunit beta (388 aa).

Positions 9 to 244 (KALFAEYGLP…PSQDDAREAH (236 aa)) constitute an ATP-grasp domain. Residues Lys46, 53–55 (GRG), Glu99, Thr102, and Glu107 each bind ATP. Mg(2+)-binding residues include Asn199 and Asp213. Substrate is bound by residues Asn264 and 321–323 (GIV).

The protein belongs to the succinate/malate CoA ligase beta subunit family. As to quaternary structure, heterotetramer of two alpha and two beta subunits. Mg(2+) serves as cofactor.

The enzyme catalyses succinate + ATP + CoA = succinyl-CoA + ADP + phosphate. The catalysed reaction is GTP + succinate + CoA = succinyl-CoA + GDP + phosphate. Its pathway is carbohydrate metabolism; tricarboxylic acid cycle; succinate from succinyl-CoA (ligase route): step 1/1. Functionally, succinyl-CoA synthetase functions in the citric acid cycle (TCA), coupling the hydrolysis of succinyl-CoA to the synthesis of either ATP or GTP and thus represents the only step of substrate-level phosphorylation in the TCA. The beta subunit provides nucleotide specificity of the enzyme and binds the substrate succinate, while the binding sites for coenzyme A and phosphate are found in the alpha subunit. In Shewanella halifaxensis (strain HAW-EB4), this protein is Succinate--CoA ligase [ADP-forming] subunit beta.